A 270-amino-acid polypeptide reads, in one-letter code: tRNA pseudouridine synthase A (270 aa).

The active-site Nucleophile is Asp51. Residue Tyr109 coordinates substrate.

Belongs to the tRNA pseudouridine synthase TruA family. As to quaternary structure, homodimer.

The catalysed reaction is uridine(38/39/40) in tRNA = pseudouridine(38/39/40) in tRNA. In terms of biological role, formation of pseudouridine at positions 38, 39 and 40 in the anticodon stem and loop of transfer RNAs. In Burkholderia lata (strain ATCC 17760 / DSM 23089 / LMG 22485 / NCIMB 9086 / R18194 / 383), this protein is tRNA pseudouridine synthase A.